Here is a 396-residue protein sequence, read N- to C-terminus: LIM/homeobox protein Lhx9 (396 aa).

LIM zinc-binding domains lie at 69–130 (ALCA…RFSV) and 131–193 (QRCA…LIQG). 3 disordered regions span residues 248–272 (ENDA…RMRT), 328–365 (RQEN…TDLT), and 377–396 (SSLD…TNLF). The segment at residues 267–326 (TKRMRTSFKHHQLRTMKSYFAINHNPDAKDLKQLAQKTGLTKRVLQVWFQNARAKFRRNV) is a DNA-binding region (homeobox). Residues 352–365 (LTPPSTATTLTDLT) are compositionally biased toward low complexity. Over residues 384–396 (SGSPPQTTLTNLF) the composition is skewed to polar residues.

Its subcellular location is the nucleus. Functionally, may be involved in gonadal development. The protein is LIM/homeobox protein Lhx9 (lhx9) of Danio rerio (Zebrafish).